Reading from the N-terminus, the 1349-residue chain is Elongator complex protein 1 (1349 aa).

Phosphoserine occurs at positions 529, 539, 551, 636, and 828. The mediates dimerization stretch occupies residues 919–1349 (QDVNVVYKSA…DFPKSHIVDF (431 aa)). A phosphoserine; by HRR25 mark is found at serine 1198 and serine 1202. Phosphoserine is present on residues serine 1205 and serine 1209. The segment covering 1214–1228 (YTGKTGGTAKTGASR) has biased composition (low complexity). The tract at residues 1214-1245 (YTGKTGGTAKTGASRRTAKNKRREERKRARGK) is disordered. The interval 1228–1246 (RRTAKNKRREERKRARGKK) is required for binding to tRNA.

This sequence belongs to the ELP1/IKA1 family. As to quaternary structure, homodimer; dimerization promotes ELP1/IKI3 stability and elongator complex formation. Component of the elongator complex which consists of ELP1/IKI3, ELP2, ELP3, ELP4, ELP5/IKI1 and ELP6. The elongator complex is composed of two copies of the Elp123 subcomplex (composed of ELP1/IKI3, ELP2 and ELP3) and two copies of the Elp456 subcomplex (composed of ELP4, ELP5/IKI1 and ELP6). The Elp123 subcomplex forms a two-lobed scaffold, which binds the Elp456 subcomplex asymmetrically. In the complex, ELP1/IKI3 interacts with ELP2. In each lobe, ELP2 is tightly sandwiched between ELP1/IKI3 and ELP3. The Elp123 subcomplex binds tRNA through ELP1/IKI3 and ELP3 and can bind 2 tRNAs simultaneously. tRNA-binding induces conformational rearrangements which precisely position the targeted anticodon base in the active site. The Elp456 subcomplex binds tRNA and has ATPase activity. ELP1/IKI3 interacts with HRR25 and KTI12. Interacts with KTI11/DPH3. In terms of processing, phosphorylation promotes the tRNA modification function of the elongator complex.

Its subcellular location is the cytoplasm. The protein localises to the nucleus. It functions in the pathway tRNA modification; 5-methoxycarbonylmethyl-2-thiouridine-tRNA biosynthesis. Functionally, component of the elongator complex which is required for multiple tRNA modifications, including mcm5U (5-methoxycarbonylmethyl uridine), mcm5s2U (5-methoxycarbonylmethyl-2-thiouridine), and ncm5U (5-carbamoylmethyl uridine). The elongator complex catalyzes formation of carboxymethyluridine in the wobble base at position 34 in tRNAs. Functions as a gamma-toxin target (TOT); disruption of the complex confers resistance to Kluyveromyces lactis toxin zymocin (pGKL1 killer toxin). May also be involved in sensitivity to Pichia inositovora toxin. ELP1/IKI3 binds to tRNA, mediating interaction of the elongator complex with tRNA. Independently, may be involved in polarized exocytosis. This Saccharomyces cerevisiae (strain ATCC 204508 / S288c) (Baker's yeast) protein is Elongator complex protein 1 (IKI3).